Consider the following 752-residue polypeptide: Neuroendocrine convertase 1 (752 aa).

The first 27 residues, 1–27, serve as a signal peptide directing secretion; it reads MKQRGWTLQCTAFTLFCVWCALNSVKA. The propeptide occupies 28–110; sequence KRQFVNEWAA…QQYEKERRKR (83 aa). One can recognise a Peptidase S8 domain in the interval 129 to 450; that stretch reads QWYLQDTRMT…FGLLNAKALV (322 aa). The active-site Charge relay system is aspartate 167. An N-linked (GlcNAc...) asparagine glycan is attached at asparagine 173. The active-site Charge relay system is histidine 208. Disulfide bonds link cysteine 225–cysteine 374 and cysteine 317–cysteine 347. Serine 382 acts as the Charge relay system in catalysis. Asparagine 401 carries N-linked (GlcNAc...) asparagine glycosylation. One can recognise a P/Homo B domain in the interval 460-597; the sequence is NVPEKKECII…KLILHGTSSQ (138 aa). Cysteine 467 and cysteine 494 are joined by a disulfide. Residues 631–662 form a disordered region; that stretch reads PTQNSLNGNLLVPKNSSSSSVEDRRDEQVQGA. Residue asparagine 645 is glycosylated (N-linked (GlcNAc...) asparagine).

It belongs to the peptidase S8 family. Furin subfamily. Ca(2+) serves as cofactor.

The protein localises to the cytoplasmic vesicle. The protein resides in the secretory vesicle. The enzyme catalyses Release of protein hormones, neuropeptides and renin from their precursors, generally by hydrolysis of -Lys-Arg-|- bonds.. Its function is as follows. Involved in the processing of hormone and other protein precursors at sites comprised of pairs of basic amino acid residues. Substrates include POMC, renin, enkephalin, dynorphin, somatostatin, insulin and AGRP. The sequence is that of Neuroendocrine convertase 1 (Pcsk1) from Rattus norvegicus (Rat).